The following is a 469-amino-acid chain: Phenylalanine--tRNA ligase, mitochondrial (469 aa).

A mitochondrion-targeting transit peptide spans 1 to 17 (MFLNRMMKTRTGLYRLY). Substrate-binding positions include 126-129 (SAHE), R155, 162-164 (THY), 169-171 (QME), E302, and F329. Residues 372–469 (SKHPGSFRDV…LVKEYSVELR (98 aa)) enclose the FDX-ACB domain.

The protein belongs to the class-II aminoacyl-tRNA synthetase family. Monomer.

It is found in the mitochondrion matrix. It catalyses the reaction tRNA(Phe) + L-phenylalanine + ATP = L-phenylalanyl-tRNA(Phe) + AMP + diphosphate + H(+). Is responsible for the charging of tRNA(Phe) with phenylalanine in mitochondrial translation. The polypeptide is Phenylalanine--tRNA ligase, mitochondrial (MSF1) (Saccharomyces cerevisiae (strain ATCC 204508 / S288c) (Baker's yeast)).